The primary structure comprises 1941 residues: Myosin-2 (1941 aa).

Residues 33-82 (DAKTSVFVAEPKESFVKGTIQSREGGKVTVKTEGGATLTVKDDQVFPMNP) form the Myosin N-terminal SH3-like domain. Phosphothreonine is present on residues T64 and T69. Residues 86 to 784 (DKIEDMAMMT…LLGLLEEMRD (699 aa)) enclose the Myosin motor domain. Residue K130 is modified to N6,N6,N6-trimethyllysine. ATP is bound at residue 179 to 186 (GESGAGKT). Residue Y389 is modified to Phosphotyrosine. The residue at position 392 (S392) is a Phosphoserine. The residue at position 419 (T419) is a Phosphothreonine. S625 carries the phosphoserine modification. The interval 661-683 (LNKLMTNLRSTHPHFVRCIIPNE) is actin-binding. H759 is modified (pros-methylhistidine). Positions 763–777 (KFGHTKVFFKAGLLG) are actin-binding. One can recognise an IQ domain in the interval 787–816 (LAQLITRTQARCRGFLARVEYQRMVERREA). The stretch at 845 to 1941 (LLKSAETEKE…EVHTKVISEE (1097 aa)) forms a coiled coil. Phosphoserine occurs at positions 1094 and 1098. 2 disordered regions span residues 1128–1149 (IEAE…SREL) and 1155–1174 (RLEE…KKRE). Residues 1130 to 1149 (AERASRAKAEKQRSDLSREL) show a composition bias toward basic and acidic residues. Phosphoserine occurs at positions 1164 and 1239. T1243 bears the Phosphothreonine mark. S1245 carries the post-translational modification Phosphoserine. T1257 carries the phosphothreonine modification. S1263 bears the Phosphoserine mark. Position 1288 is a phosphothreonine (T1288). Phosphoserine is present on residues S1290, S1294, S1305, and S1308. T1469 carries the phosphothreonine modification. Residue S1476 is modified to Phosphoserine. Y1494 carries the post-translational modification Phosphotyrosine. S1497 carries the phosphoserine modification. T1503 carries the post-translational modification Phosphothreonine. Residue S1516 is modified to Phosphoserine. Position 1519 is a phosphothreonine (T1519). S1556, S1576, S1602, S1605, S1716, and S1728 each carry phosphoserine. 2 positions are modified to phosphothreonine: T1732 and T1738. Position 1741 is a phosphoserine (S1741).

Belongs to the TRAFAC class myosin-kinesin ATPase superfamily. Myosin family. Muscle myosin is a hexameric protein that consists of 2 heavy chain subunits (MHC), 2 alkali light chain subunits (MLC) and 2 regulatory light chain subunits (MLC-2). Interacts with GCSAM.

It localises to the cytoplasm. It is found in the myofibril. Myosins are actin-based motor molecules with ATPase activity essential for muscle contraction. In Homo sapiens (Human), this protein is Myosin-2.